Consider the following 421-residue polypeptide: Large ribosomal subunit protein uL4 (421 aa).

A2 bears the N-acetylalanine mark. K14 bears the N6-acetyllysine mark. The residue at position 97 (R97) is an Omega-N-methylarginine. K106 carries the N6-acetyllysine modification. A Glycyl lysine isopeptide (Lys-Gly) (interchain with G-Cter in SUMO2) cross-link involves residue K239. N6-acetyllysine is present on K259. T266 is subject to Phosphothreonine. Phosphoserine occurs at positions 290 and 295. R300 is modified (citrulline). K327 participates in a covalent cross-link: Glycyl lysine isopeptide (Lys-Gly) (interchain with G-Cter in SUMO2). Residues K333 and K353 each carry the N6-acetyllysine modification. Residue K364 is modified to N6-acetyllysine; alternate. Residue K364 forms a Glycyl lysine isopeptide (Lys-Gly) (interchain with G-Cter in SUMO1); alternate linkage. S365 carries the phosphoserine modification. Positions 365 to 379 (SEKIVPEKGAGDKKP) are enriched in basic and acidic residues. Residues 365–421 (SEKIVPEKGAGDKKPAVGKKGKKPVDAKKLKKPAGKKVVTKKPAEKKPTTEEKKSAA) form a disordered region. Residues 393 to 404 (KLKKPAGKKVVT) are compositionally biased toward basic residues. A compositionally biased stretch (basic and acidic residues) spans 406–421 (KPAEKKPTTEEKKSAA).

It belongs to the universal ribosomal protein uL4 family. Component of the large ribosomal subunit. May bind IPO9 with low affinity. Interacts with RBM3. In terms of processing, citrullinated by PADI4.

Its subcellular location is the cytoplasm. Component of the large ribosomal subunit. The ribosome is a large ribonucleoprotein complex responsible for the synthesis of proteins in the cell. The polypeptide is Large ribosomal subunit protein uL4 (Rpl4) (Rattus norvegicus (Rat)).